The primary structure comprises 117 residues: Large ribosomal subunit protein uL22 (117 aa).

It belongs to the universal ribosomal protein uL22 family. Part of the 50S ribosomal subunit.

In terms of biological role, this protein binds specifically to 23S rRNA; its binding is stimulated by other ribosomal proteins, e.g. L4, L17, and L20. It is important during the early stages of 50S assembly. It makes multiple contacts with different domains of the 23S rRNA in the assembled 50S subunit and ribosome. The globular domain of the protein is located near the polypeptide exit tunnel on the outside of the subunit, while an extended beta-hairpin is found that lines the wall of the exit tunnel in the center of the 70S ribosome. This chain is Large ribosomal subunit protein uL22, found in Staphylococcus aureus (strain USA300).